A 247-amino-acid chain; its full sequence is uncharacterized protein (247 aa).

In terms of domain architecture, N-acetyltransferase spans 70 to 205 (ISLWMGPGNN…QKVPLEIMIR (136 aa)).

Belongs to the acetyltransferase family.

The protein resides in the endoplasmic reticulum. It localises to the golgi apparatus. The protein localises to the vacuole. This is an uncharacterized protein from Schizosaccharomyces pombe (strain 972 / ATCC 24843) (Fission yeast).